The following is a 382-amino-acid chain: UDP-4-amino-4-deoxy-L-arabinose--oxoglutarate aminotransferase (382 aa).

Residue lysine 183 is modified to N6-(pyridoxal phosphate)lysine.

The protein belongs to the DegT/DnrJ/EryC1 family. ArnB subfamily. As to quaternary structure, homodimer. Pyridoxal 5'-phosphate is required as a cofactor.

The catalysed reaction is UDP-4-amino-4-deoxy-beta-L-arabinose + 2-oxoglutarate = UDP-beta-L-threo-pentopyranos-4-ulose + L-glutamate. It participates in nucleotide-sugar biosynthesis; UDP-4-deoxy-4-formamido-beta-L-arabinose biosynthesis; UDP-4-deoxy-4-formamido-beta-L-arabinose from UDP-alpha-D-glucuronate: step 2/3. The protein operates within bacterial outer membrane biogenesis; lipopolysaccharide biosynthesis. Its function is as follows. Catalyzes the conversion of UDP-4-keto-arabinose (UDP-Ara4O) to UDP-4-amino-4-deoxy-L-arabinose (UDP-L-Ara4N). The modified arabinose is attached to lipid A and is required for resistance to polymyxin and cationic antimicrobial peptides. This Pseudomonas aeruginosa (strain UCBPP-PA14) protein is UDP-4-amino-4-deoxy-L-arabinose--oxoglutarate aminotransferase.